Reading from the N-terminus, the 210-residue chain is MRHRRKGRVLGRSPAHRKALMRNLSSALFLTERDASLDENAPKVPGRIITTLEKAKEVRPLVEKCITLAKRALPALEEAKKYETSAERGSDEYKKWRKSEQWTQWADARAPYVNAQRRVLQLIGDREAVAVLFDTIAERFTDRPGGYTRIMRLAKPRLGDGGTRAILELVGKNDRVTRSAQRPAFEQDAPESDSAPEAEAKTEEETASAN.

The disordered stretch occupies residues 177–210; the sequence is TRSAQRPAFEQDAPESDSAPEAEAKTEEETASAN.

The protein belongs to the bacterial ribosomal protein bL17 family. In terms of assembly, part of the 50S ribosomal subunit. Contacts protein L32.

This chain is Large ribosomal subunit protein bL17, found in Rhodopirellula baltica (strain DSM 10527 / NCIMB 13988 / SH1).